The sequence spans 313 residues: Olfactory receptor 5D18 (313 aa).

Residues 1-26 lie on the Extracellular side of the membrane; sequence MLLTDRNTSGTTFTLLGFSDYPELQV. A glycan (N-linked (GlcNAc...) asparagine) is linked at N7. The chain crosses the membrane as a helical span at residues 27-47; the sequence is PLFLVFLAIYNVTVLGNIGLI. Over 48 to 55 the chain is Cytoplasmic; that stretch reads VIIKINPK. A helical membrane pass occupies residues 56–76; the sequence is LHTPMYFFLSQLSFVDFCYSS. Residues 77-100 lie on the Extracellular side of the membrane; the sequence is IIAPKMLVNLVVKDRTISFLGCVV. A disulfide bridge links C98 with C190. The chain crosses the membrane as a helical span at residues 101 to 121; it reads QFFFFCTFVVTESFLLAVMAY. Topologically, residues 122–140 are cytoplasmic; sequence DRFVAICNPLLYTVNMSQK. Residues 141–161 form a helical membrane-spanning segment; that stretch reads LCVLLVVGSYAWGVSCSLELT. Residues 162–197 lie on the Extracellular side of the membrane; sequence CSALKLCFHGFNTINHFFCEFSSLLSLSCSDTYINQ. The helical transmembrane segment at 198–218 threads the bilayer; it reads WLLFFLATFNEISTLLIVLTS. Residues 219-238 lie on the Cytoplasmic side of the membrane; that stretch reads YAFIVVTILKMRSVSGRRKA. A helical membrane pass occupies residues 239-259; it reads FSTCASHLTAITIFHGTILFL. Over 260 to 272 the chain is Extracellular; sequence YCVPNSKNSRHTV. Residues 273-293 traverse the membrane as a helical segment; it reads KVASVFYTVVIPMLNPLIYSL. Residues 294-313 lie on the Cytoplasmic side of the membrane; it reads RNKDVKDTVTEILDTKVFSY.

The protein belongs to the G-protein coupled receptor 1 family.

The protein resides in the cell membrane. Functionally, odorant receptor. The polypeptide is Olfactory receptor 5D18 (OR5D18) (Homo sapiens (Human)).